The following is a 257-amino-acid chain: 24 kDa outer membrane protein (257 aa).

The signal sequence occupies residues 1–21; it reads MKNKSKLLACCLMALPISSFS.

The protein belongs to the MipA/OmpV family.

It is found in the cell outer membrane. This is 24 kDa outer membrane protein from Pasteurella multocida (strain Pm70).